We begin with the raw amino-acid sequence, 345 residues long: uncharacterized protein (345 aa).

This sequence belongs to the proline racemase family.

This is an uncharacterized protein from Bacillus anthracis.